Consider the following 183-residue polypeptide: Ran guanine nucleotide release factor (183 aa).

The tract at residues 23 to 66 is interaction with RAN; the sequence is ELRQIPDNQEVFAHSQTDQSIIIELLEYQSQVQDADAARYHFED.

It belongs to the MOG1 family. In terms of assembly, monomer. Interacts with ran.

The protein resides in the nucleus. It localises to the cytoplasm. The protein localises to the perinuclear region. Its subcellular location is the cell membrane. In terms of biological role, may regulate the intracellular trafficking of RAN. Promotes guanine nucleotide release from RAN and inhibits binding of new GTP. Plays a role in the regulation of the levels of GTP-bound RAN in the nucleus. Required for normal expression of the ion channel hcn4 and for normal expression of the cardiac transcription factors nkx2.5, gata4 and hand2 during embryonic development. Required for normal embryonic heart development and normal heart rate. The protein is Ran guanine nucleotide release factor of Danio rerio (Zebrafish).